The chain runs to 158 residues: Transcription elongation factor GreA (158 aa).

Residues 47-74 (AEYHAAKEEQSHNEGRIAELEDKLARAD) are a coiled coil.

It belongs to the GreA/GreB family.

In terms of biological role, necessary for efficient RNA polymerase transcription elongation past template-encoded arresting sites. The arresting sites in DNA have the property of trapping a certain fraction of elongating RNA polymerases that pass through, resulting in locked ternary complexes. Cleavage of the nascent transcript by cleavage factors such as GreA or GreB allows the resumption of elongation from the new 3'terminus. GreA releases sequences of 2 to 3 nucleotides. This chain is Transcription elongation factor GreA, found in Nitrobacter winogradskyi (strain ATCC 25391 / DSM 10237 / CIP 104748 / NCIMB 11846 / Nb-255).